The following is a 151-amino-acid chain: MQPFIFLFILLVIGMMAKNQSLIIAVLFLLIVKSIGLSSKVLPYLEQKGIQLGVTIITIAVLVPIATGKIGFKELAESVRSIYAWIAMLSGIAVALLAKGGVALLAKDPHVTTALVLGTILAVSLFKGVAVGPLIGAGIAYVIMKIVDVFS.

4 helical membrane passes run 4 to 24 (FIFL…SLII), 52 to 72 (LGVT…KIGF), 85 to 105 (WIAM…VALL), and 115 to 135 (LVLG…GPLI).

Belongs to the UPF0756 family.

The protein resides in the cell membrane. In Anoxybacillus flavithermus (strain DSM 21510 / WK1), this protein is UPF0756 membrane protein Aflv_0503.